Reading from the N-terminus, the 355-residue chain is Protein RecA (355 aa).

Position 65–72 (65–72 (GPESSGKT)) interacts with ATP.

It belongs to the RecA family.

The protein localises to the cytoplasm. Functionally, can catalyze the hydrolysis of ATP in the presence of single-stranded DNA, the ATP-dependent uptake of single-stranded DNA by duplex DNA, and the ATP-dependent hybridization of homologous single-stranded DNAs. It interacts with LexA causing its activation and leading to its autocatalytic cleavage. The chain is Protein RecA from Pseudomonas putida (strain GB-1).